Reading from the N-terminus, the 353-residue chain is Transcription factor MafA (353 aa).

Ser-14 bears the Phosphoserine mark. Lys-32 is covalently cross-linked (Glycyl lysine isopeptide (Lys-Gly) (interchain with G-Cter in SUMO2)). Disordered regions lie at residues 40–108 and 177–219; these read RFCH…GGTS and ADDM…GAGH. A compositionally biased stretch (low complexity) spans 46–73; it reads PPGSLSSTPLSTPCSSVPSSPSFCAPSP. Ser-49 carries the post-translational modification Phosphoserine. Thr-53 and Thr-57 each carry phosphothreonine. A phosphoserine mark is found at Ser-61 and Ser-65. Residues 74–93 are compositionally biased toward gly residues; that stretch reads GTGGGGGAGGGGGSSQAGGA. Residues 183-210 show a composition bias toward basic residues; it reads GHHHGAHHAAHHHHAAHHHHHHHHHHGG. Positions 254 to 279 are basic motif; the sequence is RLKQKRRTLKNRGYAQSCRFKRVQQR. Residues 254–317 form the bZIP domain; sequence RLKQKRRTLK…DLYKEKYEKL (64 aa). The segment at 282 to 303 is leucine-zipper; the sequence is LESEKCQLQSQVEQLKLEVGRL. The disordered stretch occupies residues 315-353; it reads EKLAGRGGPGSAGGAGFPREPSPPQAGPGGAKGTADFFL. Residues 319-330 show a composition bias toward gly residues; it reads GRGGPGSAGGAG.

This sequence belongs to the bZIP family. Maf subfamily. As to quaternary structure, forms homodimers or heterodimers. Monomers and dimers are able to bind DNA, but the off-rate is faster for monomers. Interacts with NEUROD1 and PDX1. May interact with MAFB, FOS, JUN and PCAF. In terms of processing, ubiquitinated, leading to its degradation by the proteasome. Post-translationally, phosphorylated at tyrosines. Expressed in the islets of Langerhans (at protein level).

It is found in the nucleus. In terms of biological role, transcription factor that activates insulin gene expression. Acts synergistically with NEUROD1/BETA2 and PDX1. Binds the insulin enhancer C1/RIPE3b element. Binds to consensus TRE-type MARE 5'-TGCTGACTCAGCA-3' DNA sequence. The chain is Transcription factor MafA (MAFA) from Homo sapiens (Human).